A 134-amino-acid chain; its full sequence is Histone-like protein Rv3852 (134 aa).

Residues 1–10 (MPDPQDRPDS) are compositionally biased toward basic and acidic residues. Positions 1 to 68 (MPDPQDRPDS…PAEAPVSLQQ (68 aa)) are disordered. Basic residues predominate over residues 23–48 (LPAKKAAKKAPARKTPAKKAPAKKTP). Residues 111 to 128 (PVPLIVAVTLSLLALLLI) traverse the membrane as a helical segment.

Homodimer in solution. Is probably able to self-associate in higher oligomers along the DNA molecules. Interacts with the N-terminal region of Wag31.

It is found in the cell inner membrane. Its activity is regulated as follows. Can interact directly in vitro with the compound agrimophol, a phloroglucinol from the A.pilosa plant, whose extracts have been used in traditional Chinese medicine to treat pulmonary infections. Interaction with agrimophol leads to disruption of Rv3852's DNA binding function. Binds DNA in vitro. It has been proposed that Rv3852 plays a role in nucleoid organization and may function as an anchorage to tether the DNA to the membrane. However, it was later shown that it has no influence on nucleoid shape or compaction. It plays no role in virulence and only a minor role in the control of transcription, and does not appear to function as a typical nucleoid-associated protein. In terms of biological role, interacts with Wag31, an important cell shape and cell wall integrity determinant, and facilitates the localization of Wag31 to the cell poles and the cell wall, thus enabling nascent peptidoglycan synthesis. This is Histone-like protein Rv3852 from Mycobacterium tuberculosis (strain ATCC 25618 / H37Rv).